The sequence spans 242 residues: Ribonuclease PH (242 aa).

Phosphate contacts are provided by residues R87 and 125 to 127; that span reads GTR.

The protein belongs to the RNase PH family. Homohexameric ring arranged as a trimer of dimers.

It catalyses the reaction tRNA(n+1) + phosphate = tRNA(n) + a ribonucleoside 5'-diphosphate. Functionally, phosphorolytic 3'-5' exoribonuclease that plays an important role in tRNA 3'-end maturation. Removes nucleotide residues following the 3'-CCA terminus of tRNAs; can also add nucleotides to the ends of RNA molecules by using nucleoside diphosphates as substrates, but this may not be physiologically important. Probably plays a role in initiation of 16S rRNA degradation (leading to ribosome degradation) during starvation. The sequence is that of Ribonuclease PH from Thermosynechococcus vestitus (strain NIES-2133 / IAM M-273 / BP-1).